The sequence spans 373 residues: Queuine tRNA-ribosyltransferase (373 aa).

The active-site Proton acceptor is aspartate 93. Substrate-binding positions include 93-97, aspartate 147, glutamine 189, and glycine 216; that span reads DSGGF. The tract at residues 247–253 is RNA binding; the sequence is GVGAPED. The active-site Nucleophile is the aspartate 266. Positions 271–275 are RNA binding; important for wobble base 34 recognition; it reads TRIAR. Residues cysteine 304, cysteine 306, cysteine 309, and histidine 335 each contribute to the Zn(2+) site.

This sequence belongs to the queuine tRNA-ribosyltransferase family. As to quaternary structure, homodimer. Within each dimer, one monomer is responsible for RNA recognition and catalysis, while the other monomer binds to the replacement base PreQ1. Zn(2+) is required as a cofactor.

The catalysed reaction is 7-aminomethyl-7-carbaguanine + guanosine(34) in tRNA = 7-aminomethyl-7-carbaguanosine(34) in tRNA + guanine. The protein operates within tRNA modification; tRNA-queuosine biosynthesis. Catalyzes the base-exchange of a guanine (G) residue with the queuine precursor 7-aminomethyl-7-deazaguanine (PreQ1) at position 34 (anticodon wobble position) in tRNAs with GU(N) anticodons (tRNA-Asp, -Asn, -His and -Tyr). Catalysis occurs through a double-displacement mechanism. The nucleophile active site attacks the C1' of nucleotide 34 to detach the guanine base from the RNA, forming a covalent enzyme-RNA intermediate. The proton acceptor active site deprotonates the incoming PreQ1, allowing a nucleophilic attack on the C1' of the ribose to form the product. After dissociation, two additional enzymatic reactions on the tRNA convert PreQ1 to queuine (Q), resulting in the hypermodified nucleoside queuosine (7-(((4,5-cis-dihydroxy-2-cyclopenten-1-yl)amino)methyl)-7-deazaguanosine). This Halothermothrix orenii (strain H 168 / OCM 544 / DSM 9562) protein is Queuine tRNA-ribosyltransferase.